The sequence spans 520 residues: Amine oxidase [flavin-containing] B (520 aa).

An N-acetylserine modification is found at Ser-2. Residues 2-489 (SNKCDVIVVG…TFLERHLPSV (488 aa)) lie on the Cytoplasmic side of the membrane. Lys-52 carries the post-translational modification N6-acetyllysine. Cys-397 carries the S-8alpha-FAD cysteine modification. Residues 490–516 (PGLLKLLGLTTILSATALGFLAHKKGL) form a helical; Anchor for type IV membrane protein membrane-spanning segment. Residues 517-520 (FVRF) lie on the Mitochondrial intermembrane side of the membrane.

It belongs to the flavin monoamine oxidase family. As to quaternary structure, monomer, homo- or heterodimer (containing two subunits of similar size). Each subunit contains a covalently bound flavin. Enzymatically active as monomer. FAD is required as a cofactor.

It is found in the mitochondrion outer membrane. The catalysed reaction is a secondary aliphatic amine + O2 + H2O = a primary amine + an aldehyde + H2O2. It carries out the reaction (R)-adrenaline + O2 + H2O = (R)-3,4-dihydroxymandelaldehyde + methylamine + H2O2. It catalyses the reaction a primary methyl amine + O2 + H2O = an aldehyde + H2O2 + NH4(+). The enzyme catalyses dopamine + O2 + H2O = 3,4-dihydroxyphenylacetaldehyde + H2O2 + NH4(+). The catalysed reaction is tyramine + O2 + H2O = (4-hydroxyphenyl)acetaldehyde + H2O2 + NH4(+). It carries out the reaction (R)-noradrenaline + O2 + H2O = (R)-3,4-dihydroxymandelaldehyde + H2O2 + NH4(+). It catalyses the reaction benzylamine + O2 + H2O = benzaldehyde + H2O2 + NH4(+). The enzyme catalyses 2-phenylethylamine + O2 + H2O = 2-phenylacetaldehyde + H2O2 + NH4(+). The catalysed reaction is N-acetylputrescine + O2 + H2O = 4-acetamidobutanal + H2O2 + NH4(+). In terms of biological role, catalyzes the oxidative deamination of primary and some secondary amines such as neurotransmitters, and exogenous amines including the tertiary amine, neurotoxin 1-methyl-4-phenyl-1,2,3,6-tetrahydropyridine (MPTP), with concomitant reduction of oxygen to hydrogen peroxide and participates in the metabolism of neuroactive and vasoactive amines in the central nervous system and peripheral tissues. Preferentially degrades benzylamine and phenylethylamine. The protein is Amine oxidase [flavin-containing] B of Rattus norvegicus (Rat).